Here is a 331-residue protein sequence, read N- to C-terminus: Inositol 2-dehydrogenase (331 aa).

The protein belongs to the Gfo/Idh/MocA family. As to quaternary structure, homotetramer.

The enzyme catalyses myo-inositol + NAD(+) = scyllo-inosose + NADH + H(+). In terms of biological role, involved in the oxidation of myo-inositol (MI) to 2-keto-myo-inositol (2KMI or 2-inosose). The chain is Inositol 2-dehydrogenase from Renibacterium salmoninarum (strain ATCC 33209 / DSM 20767 / JCM 11484 / NBRC 15589 / NCIMB 2235).